Here is a 1119-residue protein sequence, read N- to C-terminus: DNA-directed RNA polymerase subunit beta (1119 aa).

It belongs to the RNA polymerase beta chain family. In terms of assembly, the RNAP catalytic core consists of 2 alpha, 1 beta, 1 beta' and 1 omega subunit. When a sigma factor is associated with the core the holoenzyme is formed, which can initiate transcription.

The enzyme catalyses RNA(n) + a ribonucleoside 5'-triphosphate = RNA(n+1) + diphosphate. DNA-dependent RNA polymerase catalyzes the transcription of DNA into RNA using the four ribonucleoside triphosphates as substrates. This Thermus thermophilus (strain ATCC 27634 / DSM 579 / HB8) protein is DNA-directed RNA polymerase subunit beta.